The primary structure comprises 361 residues: Dihydroorotate dehydrogenase (quinone) (361 aa).

FMN is bound by residues 67-71 (AGLDK) and Thr91. Lys71 contributes to the substrate binding site. 116–120 (NRMGF) provides a ligand contact to substrate. Positions 145 and 178 each coordinate FMN. Asn178 provides a ligand contact to substrate. Ser181 (nucleophile) is an active-site residue. Asn183 serves as a coordination point for substrate. Lys223 and Gly251 together coordinate FMN. Position 252-253 (252-253 (NT)) interacts with substrate. FMN-binding positions include Gly273, Gly302, and 323–324 (YT).

The protein belongs to the dihydroorotate dehydrogenase family. Type 2 subfamily. Monomer. Requires FMN as cofactor.

It localises to the cell membrane. The enzyme catalyses (S)-dihydroorotate + a quinone = orotate + a quinol. It functions in the pathway pyrimidine metabolism; UMP biosynthesis via de novo pathway; orotate from (S)-dihydroorotate (quinone route): step 1/1. Functionally, catalyzes the conversion of dihydroorotate to orotate with quinone as electron acceptor. The protein is Dihydroorotate dehydrogenase (quinone) of Deinococcus geothermalis (strain DSM 11300 / CIP 105573 / AG-3a).